Reading from the N-terminus, the 273-residue chain is Large ribosomal subunit protein uL2 (273 aa).

The segment at Gly-222–Lys-273 is disordered. Positions Asp-229–Asn-239 are enriched in basic and acidic residues.

The protein belongs to the universal ribosomal protein uL2 family. Part of the 50S ribosomal subunit. Forms a bridge to the 30S subunit in the 70S ribosome.

Its function is as follows. One of the primary rRNA binding proteins. Required for association of the 30S and 50S subunits to form the 70S ribosome, for tRNA binding and peptide bond formation. It has been suggested to have peptidyltransferase activity; this is somewhat controversial. Makes several contacts with the 16S rRNA in the 70S ribosome. The protein is Large ribosomal subunit protein uL2 of Tolumonas auensis (strain DSM 9187 / NBRC 110442 / TA 4).